The sequence spans 185 residues: Ribosome-recycling factor (185 aa).

Belongs to the RRF family.

It is found in the cytoplasm. Its function is as follows. Responsible for the release of ribosomes from messenger RNA at the termination of protein biosynthesis. May increase the efficiency of translation by recycling ribosomes from one round of translation to another. This Streptococcus suis (strain 98HAH33) protein is Ribosome-recycling factor.